The chain runs to 1211 residues: DNA-directed RNA polymerase subunit beta' (1211 aa).

Positions 60, 62, 75, and 78 each coordinate Zn(2+). 3 residues coordinate Mg(2+): Asp-450, Asp-452, and Asp-454. Cys-819, Cys-893, Cys-900, and Cys-903 together coordinate Zn(2+).

The protein belongs to the RNA polymerase beta' chain family. As to quaternary structure, the RNAP catalytic core consists of 2 alpha, 1 beta, 1 beta' and 1 omega subunit. When a sigma factor is associated with the core the holoenzyme is formed, which can initiate transcription. Mg(2+) serves as cofactor. Zn(2+) is required as a cofactor.

The enzyme catalyses RNA(n) + a ribonucleoside 5'-triphosphate = RNA(n+1) + diphosphate. DNA-dependent RNA polymerase catalyzes the transcription of DNA into RNA using the four ribonucleoside triphosphates as substrates. The protein is DNA-directed RNA polymerase subunit beta' of Streptococcus equi subsp. equi (strain 4047).